A 342-amino-acid chain; its full sequence is Selenide, water dikinase (342 aa).

Cys13 is an active-site residue. Residues Lys16 and 44–46 (SCD) contribute to the ATP site. Position 47 (Asp47) interacts with Mg(2+). Residues Asp64, Asp87, and 134–136 (GHS) contribute to the ATP site. Asp87 is a binding site for Mg(2+). Asp222 serves as a coordination point for Mg(2+).

It belongs to the selenophosphate synthase 1 family. Class I subfamily. Homodimer. Mg(2+) serves as cofactor.

The enzyme catalyses hydrogenselenide + ATP + H2O = selenophosphate + AMP + phosphate + 2 H(+). Functionally, synthesizes selenophosphate from selenide and ATP. This Agathobacter rectalis (strain ATCC 33656 / DSM 3377 / JCM 17463 / KCTC 5835 / VPI 0990) (Eubacterium rectale) protein is Selenide, water dikinase.